The following is a 727-amino-acid chain: NADH-ubiquinone oxidoreductase 75 kDa subunit, mitochondrial (727 aa).

The N-terminal 23 residues, 1 to 23 (MLRIPVRKALVGLSKSPKGCVRT), are a transit peptide targeting the mitochondrion. One can recognise a 2Fe-2S ferredoxin-type domain in the interval 30 to 108 (NLIEVFVDGQ…GWNILTNSEK (79 aa)). [2Fe-2S] cluster-binding residues include Cys-64, Cys-75, and Cys-78. Residue Lys-84 is modified to N6-acetyllysine. Cys-92 provides a ligand contact to [2Fe-2S] cluster. One can recognise a 4Fe-4S His(Cys)3-ligated-type domain in the interval 108–147 (KSKKAREGVMELLLANHPLDCPICDQGGECDLQDQSMMFG). Residues His-124, Cys-128, Cys-131, Cys-137, Cys-176, Cys-179, Cys-182, and Cys-226 each coordinate [4Fe-4S] cluster. Residues 245–301 (TRKTESIDVMDAVGSNIVVSTRTGEVMRILPRMHEDINEEWISDKTRFAYDGLKRQR) enclose the 4Fe-4S Mo/W bis-MGD-type domain. N6-acetyllysine occurs at positions 467, 499, and 709.

This sequence belongs to the complex I 75 kDa subunit family. In terms of assembly, core subunit of respiratory chain NADH dehydrogenase (Complex I) which is composed of 45 different subunits. This is the largest subunit of complex I and it is a component of the iron-sulfur (IP) fragment of the enzyme. Complex I associates with ubiquinol-cytochrome reductase complex (Complex III) to form supercomplexes. Interacts with MDM2 and AKAP1. It depends on [2Fe-2S] cluster as a cofactor. [4Fe-4S] cluster is required as a cofactor.

Its subcellular location is the mitochondrion inner membrane. It carries out the reaction a ubiquinone + NADH + 5 H(+)(in) = a ubiquinol + NAD(+) + 4 H(+)(out). Its function is as follows. Core subunit of the mitochondrial membrane respiratory chain NADH dehydrogenase (Complex I) which catalyzes electron transfer from NADH through the respiratory chain, using ubiquinone as an electron acceptor. Essential for catalysing the entry and efficient transfer of electrons within complex I. Plays a key role in the assembly and stability of complex I and participates in the association of complex I with ubiquinol-cytochrome reductase complex (Complex III) to form supercomplexes. This Pongo abelii (Sumatran orangutan) protein is NADH-ubiquinone oxidoreductase 75 kDa subunit, mitochondrial (NDUFS1).